Reading from the N-terminus, the 380-residue chain is Chaperone protein DnaJ (380 aa).

The J domain occupies 5–70 (DYYEALGVAR…RKRTAYDQFG (66 aa)). A CR-type zinc finger spans residues 137 to 215 (GTTAKIRIPT…CRGEGRVREH (79 aa)). Positions 150, 153, 167, 170, 189, 192, 203, and 206 each coordinate Zn(2+). 4 CXXCXGXG motif repeats span residues 150 to 157 (CKACEGSG), 167 to 174 (CPTCGGHG), 189 to 196 (CPRCHGSG), and 203 to 210 (CSTCRGEG). A disordered region spans residues 222–247 (IPPGVDTGDRIRLTGEGEAGESGGPP).

This sequence belongs to the DnaJ family. As to quaternary structure, homodimer. Zn(2+) is required as a cofactor.

It is found in the cytoplasm. In terms of biological role, participates actively in the response to hyperosmotic and heat shock by preventing the aggregation of stress-denatured proteins and by disaggregating proteins, also in an autonomous, DnaK-independent fashion. Unfolded proteins bind initially to DnaJ; upon interaction with the DnaJ-bound protein, DnaK hydrolyzes its bound ATP, resulting in the formation of a stable complex. GrpE releases ADP from DnaK; ATP binding to DnaK triggers the release of the substrate protein, thus completing the reaction cycle. Several rounds of ATP-dependent interactions between DnaJ, DnaK and GrpE are required for fully efficient folding. Also involved, together with DnaK and GrpE, in the DNA replication of plasmids through activation of initiation proteins. This Nitrosococcus oceani (strain ATCC 19707 / BCRC 17464 / JCM 30415 / NCIMB 11848 / C-107) protein is Chaperone protein DnaJ.